A 495-amino-acid chain; its full sequence is Angiopoietin-2 (495 aa).

Residues 1–18 (MWQIVFFTLSCDLVRAAA) form the signal peptide. 6 N-linked (GlcNAc...) asparagine glycosylation sites follow: Asn-88, Asn-118, Asn-132, Asn-150, Asn-239, and Asn-303. Residues 165–247 (STNKLEKQIL…VNNSVLQKQQ (83 aa)) adopt a coiled-coil conformation. The 221-residue stretch at 274-494 (KEEQIIYRDC…GTTMMIRPAD (221 aa)) folds into the Fibrinogen C-terminal domain. An intrachain disulfide couples Cys-283 to Cys-312. Ca(2+) contacts are provided by Asp-428, Asp-430, Cys-432, and Cys-434. 2 disulfide bridges follow: Cys-432–Cys-434 and Cys-436–Cys-449.

Interacts with TEK/TIE2, competing for the same binding site as ANGPT1. Interacts with ITGA5. Interacts with SVEP1/polydom. Interacts with THBD; this interaction significantly inhibits the generation of activated PC and TAFIa/CPB2 by the thrombin/thrombomodulin complex.

The protein localises to the secreted. Binds to TEK/TIE2, competing for the ANGPT1 binding site, and modulating ANGPT1 signaling. Can induce tyrosine phosphorylation of TEK/TIE2 in the absence of ANGPT1. In the absence of angiogenic inducers, such as VEGF, ANGPT2-mediated loosening of cell-matrix contacts may induce endothelial cell apoptosis with consequent vascular regression. In concert with VEGF, it may facilitate endothelial cell migration and proliferation, thus serving as a permissive angiogenic signal. Involved in the regulation of lymphangiogenesis. The chain is Angiopoietin-2 (ANGPT2) from Canis lupus familiaris (Dog).